The following is a 934-amino-acid chain: AP-2 complex subunit alpha (934 aa).

The segment at 623-670 is disordered; the sequence is RVPENAEIRETKSPVPNSHNNAHSNAQTNHTSSANNANASSDLLGLST. The span at 636–645 shows a compositional bias: polar residues; the sequence is PVPNSHNNAH. Positions 646-663 are enriched in low complexity; sequence SNAQTNHTSSANNANASS.

Belongs to the adapter complexes large subunit family. Adaptor protein complex 2 (AP-2) is a heterotetramer composed of two large adaptins (alpha-type and beta-type subunits), a medium adaptin (mu-type subunit AP50) and a small adaptin (sigma-type subunit AP17).

The protein localises to the cell membrane. It is found in the membrane. Its subcellular location is the coated pit. Adaptins are components of the adapter complexes which link clathrin to receptors in coated vesicles. Clathrin-associated protein complexes are believed to interact with the cytoplasmic tails of membrane proteins, leading to their selection and concentration. Alpha adaptin is a subunit of the plasma membrane adapter. This is AP-2 complex subunit alpha from Anopheles gambiae (African malaria mosquito).